Reading from the N-terminus, the 137-residue chain is Large ribosomal subunit protein uL16 (137 aa).

Belongs to the universal ribosomal protein uL16 family. Part of the 50S ribosomal subunit.

In terms of biological role, binds 23S rRNA and is also seen to make contacts with the A and possibly P site tRNAs. This chain is Large ribosomal subunit protein uL16, found in Cellvibrio japonicus (strain Ueda107) (Pseudomonas fluorescens subsp. cellulosa).